The primary structure comprises 433 residues: Enolase (433 aa).

Q167 is a (2R)-2-phosphoglycerate binding site. Residue E209 is the Proton donor of the active site. The Mg(2+) site is built by D246, E291, and D318. The (2R)-2-phosphoglycerate site is built by K343, R372, S373, and K394. K343 functions as the Proton acceptor in the catalytic mechanism.

It belongs to the enolase family. In terms of assembly, component of the RNA degradosome, a multiprotein complex involved in RNA processing and mRNA degradation. It depends on Mg(2+) as a cofactor.

The protein resides in the cytoplasm. Its subcellular location is the secreted. The protein localises to the cell surface. It carries out the reaction (2R)-2-phosphoglycerate = phosphoenolpyruvate + H2O. It participates in carbohydrate degradation; glycolysis; pyruvate from D-glyceraldehyde 3-phosphate: step 4/5. Its function is as follows. Catalyzes the reversible conversion of 2-phosphoglycerate (2-PG) into phosphoenolpyruvate (PEP). It is essential for the degradation of carbohydrates via glycolysis. The protein is Enolase of Haemophilus ducreyi (strain 35000HP / ATCC 700724).